A 530-amino-acid chain; its full sequence is Glucose-6-phosphate 1-dehydrogenase (530 aa).

NADP(+) contacts are provided by residues 53-60 (GASGDLAK), arginine 87, tyrosine 162, and lysine 186. D-glucose 6-phosphate contacts are provided by residues lysine 186, 216–220 (HYLGK), glutamate 254, and aspartate 273. The Proton acceptor role is filled by histidine 278. Arginine 372 contacts NADP(+). D-glucose 6-phosphate-binding residues include lysine 375 and arginine 380. Positions 381, 385, and 408 each coordinate NADP(+). Residue glutamine 410 participates in D-glucose 6-phosphate binding. Residues 416–418 (YAK), 436–438 (DLT), arginine 502, tyrosine 518, and tryptophan 524 contribute to the NADP(+) site.

The protein belongs to the glucose-6-phosphate dehydrogenase family.

It localises to the cytoplasm. It is found in the cytosol. It catalyses the reaction D-glucose 6-phosphate + NADP(+) = 6-phospho-D-glucono-1,5-lactone + NADPH + H(+). It participates in carbohydrate degradation; pentose phosphate pathway; D-ribulose 5-phosphate from D-glucose 6-phosphate (oxidative stage): step 1/3. Cytosolic glucose-6-phosphate dehydrogenase that catalyzes the first and rate-limiting step of the oxidative branch within the pentose phosphate pathway/shunt, an alternative route to glycolysis for the dissimilation of carbohydrates and a major source of reducing power and metabolic intermediates for fatty acid and nucleic acid biosynthetic processes. This chain is Glucose-6-phosphate 1-dehydrogenase (g6pd), found in Takifugu rubripes (Japanese pufferfish).